A 24-amino-acid chain; its full sequence is Lectin (24 aa).

Residues 1–18 show a composition bias toward polar residues; that stretch reads AEEQSFSSTKFSTDQPNL. The tract at residues 1-24 is disordered; that stretch reads AEEQSFSSTKFSTDQPNLILQGDA.

The protein belongs to the leguminous lectin family. As to quaternary structure, homotetramer.

The protein is Lectin of Crotalaria juncea (Sunn hemp).